The following is a 537-amino-acid chain: Probable feruloyl esterase ARB_07085 (537 aa).

The signal sequence occupies residues 1–22; sequence MVTLPLLLSILPLAAVFSSAAS. Asn-67, Asn-76, and Asn-189 each carry an N-linked (GlcNAc...) asparagine glycan. 3 disulfides stabilise this stretch: Cys-196/Cys-459, Cys-263/Cys-280, and Cys-508/Cys-529. The active-site Acyl-ester intermediate is the Ser-197. Ca(2+)-binding residues include Asp-264, Asp-267, Val-269, Asp-271, and Val-273. N-linked (GlcNAc...) asparagine glycosylation occurs at Asn-339. Active-site charge relay system residues include Asp-419 and His-458.

The protein belongs to the tannase family.

It localises to the secreted. The catalysed reaction is feruloyl-polysaccharide + H2O = ferulate + polysaccharide.. Functionally, hydrolyzes the feruloyl-arabinose ester bond in arabinoxylans as well as the feruloyl-galactose and feruloyl-arabinose ester bonds. The sequence is that of Probable feruloyl esterase ARB_07085 from Arthroderma benhamiae (strain ATCC MYA-4681 / CBS 112371) (Trichophyton mentagrophytes).